We begin with the raw amino-acid sequence, 147 residues long: Prefoldin subunit alpha (147 aa).

This sequence belongs to the prefoldin alpha subunit family. Heterohexamer of two alpha and four beta subunits.

The protein resides in the cytoplasm. Functionally, molecular chaperone capable of stabilizing a range of proteins. Seems to fulfill an ATP-independent, HSP70-like function in archaeal de novo protein folding. The protein is Prefoldin subunit alpha of Thermococcus onnurineus (strain NA1).